Consider the following 472-residue polypeptide: MMKRRRIFMYYCFCFLLKYVAFSNVTNPNTTLGHFEICKINIYSGDAEECVLENEFGKMFLFICDIDYNEMSKNIVLPSECAKKTYIDHVNPNGTSPEVNTYDIFPDLIGANESKFRDKFYFYGTPYSSKDIDFICLCFSEVKPDIKHIIKMSFKKMTKKIKGCDFGDNVPTKKDLTNGKALYENSSCHIYAYPGDVIGINCYKKDINNIYNNNLELSPNNCFHNVYYENDILLSSKNLIPNSRVIPDPSNDVKLSKMHSYMSYIILPDEINENVKISCSCKRNEYVGTMFLYVNTSKNILTYTGNNVEETAHLNDHYISIGDMWDMGLYENPEQIQSIISNHANKKYYEHMKIYKGNKMDPSDEDESNENAHNGNRANKDANYSEKMVDNRRQKNNSLNHTNYHGNYNENDNEINISTHDKYYEDHHLGSNRPLRKKRTFWQNLFGTSSSYYEVFNYFSIAFILIIHMLLW.

Positions 1 to 23 are cleaved as a signal peptide; sequence MMKRRRIFMYYCFCFLLKYVAFS. 5 N-linked (GlcNAc...) asparagine glycosylation sites follow: asparagine 24, asparagine 29, asparagine 93, asparagine 112, and asparagine 185. 6-Cys domains follow at residues 24 to 157 and 160 to 299; these read NVTN…FKKM and KIKG…TSKN. Intrachain disulfides connect cysteine 64-cysteine 138, cysteine 81-cysteine 136, cysteine 164-cysteine 188, cysteine 202-cysteine 281, and cysteine 222-cysteine 279. Asparagine 295, asparagine 306, asparagine 383, asparagine 396, asparagine 400, and asparagine 416 each carry an N-linked (GlcNAc...) asparagine glycan. The tract at residues 359–385 is disordered; the sequence is KMDPSDEDESNENAHNGNRANKDANYS. The GPI-anchor amidated serine moiety is linked to residue serine 449. Residues 450–472 constitute a propeptide, removed in mature form; the sequence is SSYYEVFNYFSIAFILIIHMLLW.

It is found in the cell surface. The protein localises to the cell membrane. Its function is as follows. Involved in sporozoite infection of hepatocytes and replication therein. The sequence is that of Sporozoite surface protein P36p (P52) from Plasmodium berghei (strain Anka).